The sequence spans 1087 residues: Band 4.1-like protein 3 (1087 aa).

Met-1 is subject to N-acetylmethionine. Residues 1-43 (MTTESGSDSESKPDQEAEPQEAAGAQGRAGAPVPEPPKEEQQQ) form a disordered region. Position 2 is an N-acetylthreonine; in Band 4.1-like protein 3, N-terminally processed (Thr-2). Residues 20 to 32 (QEAAGAQGRAGAP) are compositionally biased toward low complexity. The residue at position 88 (Ser-88) is a Phosphoserine. Residues 110-391 (MQCKVILLDG…EHHTFFRLLL (282 aa)) form the FERM domain. Positions 394-513 (APPKKFLTLG…PGLGTDSCPL (120 aa)) are hydrophilic. A phosphoserine mark is found at Ser-420, Ser-443, and Ser-460. Polar residues predominate over residues 459–469 (ISQTNLITTVT). 4 disordered regions span residues 459-529 (ISQT…TELR), 541-563 (GYEPSRAEHLPGEPALDSDGPGR), 675-715 (SASL…EDAE), and 937-965 (SETLEQKPHFESSTVKTETISFGSVSPGG). 2 positions are modified to phosphothreonine: Thr-469 and Thr-492. The tract at residues 514–860 (SPPSTHCAPT…VVQETVLVEE (347 aa)) is spectrin--actin-binding. Residues 516–526 (PSTHCAPTSPT) show a composition bias toward polar residues. Acidic residues predominate over residues 681 to 691 (DPSDSSEEETD). Low complexity predominate over residues 698-707 (AADGETTATE). At Thr-706 the chain carries Phosphothreonine. Residues Ser-708, Ser-960, and Ser-962 each carry the phosphoserine modification. The interval 861 to 1083 (RRVVHASGDA…VHKETEITPE (223 aa)) is C-terminal (CTD). The segment covering 947-960 (ESSTVKTETISFGS) has biased composition (polar residues). Thr-1081 is modified (phosphothreonine).

As to quaternary structure, interacts (via FERM domain) with CADM1. Interacts (via FERM domain) with PRMT3; the interaction is direct and inhibits the protein-arginine N-methyltransferase activity of PRMT3. Interacts with PRMT5. Interacts with PRMT6. As to expression, expressed at high levels in brain, with lower levels in kidney, intestine, and testis. Detected in lung.

The protein localises to the cytoplasm. It localises to the cytoskeleton. It is found in the cell junction. The protein resides in the cell membrane. Its function is as follows. Tumor suppressor that inhibits cell proliferation and promotes apoptosis. Modulates the activity of protein arginine N-methyltransferases, including PRMT3 and PRMT5. In Homo sapiens (Human), this protein is Band 4.1-like protein 3.